The chain runs to 327 residues: Ribose 1,5-bisphosphate isomerase (327 aa).

Substrate is bound by residues 25–28 (RGAA) and R68. Catalysis depends on C133, which acts as the Proton acceptor. D202 serves as the catalytic Proton donor. Substrate is bound by residues 212–213 (NK) and K238.

It belongs to the eIF-2B alpha/beta/delta subunits family. R15P isomerase subfamily.

The catalysed reaction is alpha-D-ribose 1,5-bisphosphate = D-ribulose 1,5-bisphosphate. In terms of biological role, isomerase involved in the non-carboxylating pentose bisphosphate pathway, a nucleoside degradation pathway present in some halophilic archaea. Catalyzes the isomerization of ribose 1,5-bisphosphate (R15P) to ribulose 1,5-bisphosphate (RuBP). This chain is Ribose 1,5-bisphosphate isomerase, found in Haloterrigena turkmenica (strain ATCC 51198 / DSM 5511 / JCM 9101 / NCIMB 13204 / VKM B-1734 / 4k) (Halococcus turkmenicus).